A 198-amino-acid chain; its full sequence is Chromophore lyase CpcT/CpeT 3 (198 aa).

It belongs to the CpcT/CpeT biliprotein lyase family.

In terms of biological role, covalently attaches a chromophore to Cys residue(s) of phycobiliproteins. The chain is Chromophore lyase CpcT/CpeT 3 from Synechococcus sp. (strain JA-3-3Ab) (Cyanobacteria bacterium Yellowstone A-Prime).